Consider the following 256-residue polypeptide: MVPLPWELEEDILSRLAAQSLVRFRSVCKRWNYLFDEKSFIKNHFARACPQFIFMTDSNIYSIEIIGLDGVDPTIKLRVLDSSGIPYRDWKFAYITITACDGFLFCNSWASPKGTAFWNPWLKQVKWIEYEDKGFNVCGLGYDNTRDGKVYKILGYLMCRPEDGSSYVYHQRVAIYDCASHAFKFIEISNKDWFLTDVTRFSVSLNGNLYWLSPIPNTDDFLIQCFDFSREICKPFCLLPCRKFDAFDLLVSFQGR.

The F-box domain occupies 1–44 (MVPLPWELEEDILSRLAAQSLVRFRSVCKRWNYLFDEKSFIKNH).

In Arabidopsis thaliana (Mouse-ear cress), this protein is Putative F-box protein At3g51171.